The primary structure comprises 207 residues: Guanylate kinase (207 aa).

The Guanylate kinase-like domain occupies 4–184; it reads GTLYIVSAPS…ALMDFKAILR (181 aa). An ATP-binding site is contributed by 11-18; it reads APSGAGKS.

This sequence belongs to the guanylate kinase family.

The protein resides in the cytoplasm. The enzyme catalyses GMP + ATP = GDP + ADP. Its function is as follows. Essential for recycling GMP and indirectly, cGMP. The sequence is that of Guanylate kinase from Vibrio parahaemolyticus serotype O3:K6 (strain RIMD 2210633).